The sequence spans 500 residues: Pyruvate kinase 1 (500 aa).

Residue serine 2 is modified to N-acetylserine. 2 positions are modified to phosphoserine: serine 9 and serine 16. Phosphothreonine is present on threonine 31. Arginine 49 contributes to the substrate binding site. 2 residues coordinate K(+): asparagine 51 and serine 53. 51 to 54 serves as a coordination point for ATP; the sequence is NFSH. At serine 70 the chain carries Phosphoserine. Aspartate 84 and threonine 85 together coordinate K(+). Arginine 91 provides a ligand contact to ATP. Glycyl lysine isopeptide (Lys-Gly) (interchain with G-Cter in URM1) cross-links involve residues lysine 119, lysine 124, lysine 161, lysine 164, and lysine 166. Lysine 177 provides a ligand contact to ATP. The residue at position 184 (threonine 184) is a Phosphothreonine. Lysine 204 participates in a covalent cross-link: Glycyl lysine isopeptide (Lys-Gly) (interchain with G-Cter in ubiquitin). Serine 213 carries the post-translational modification Phosphoserine. Residue lysine 240 coordinates substrate. Glutamate 242 contacts Mn(2+). Residue lysine 255 forms a Glycyl lysine isopeptide (Lys-Gly) (interchain with G-Cter in ubiquitin) linkage. 2 residues coordinate substrate: glycine 265 and aspartate 266. Aspartate 266 lines the Mn(2+) pocket. Residue lysine 292 forms a Glycyl lysine isopeptide (Lys-Gly) (interchain with G-Cter in URM1) linkage. Residue threonine 298 participates in substrate binding. Residue serine 316 is modified to Phosphoserine. A Glycyl lysine isopeptide (Lys-Gly) (interchain with G-Cter in URM1) cross-link involves residue lysine 394. 402-407 provides a ligand contact to beta-D-fructose 1,6-bisphosphate; it reads STSGTT. A Cysteine persulfide modification is found at cysteine 418. Lysine 446 is covalently cross-linked (Glycyl lysine isopeptide (Lys-Gly) (interchain with G-Cter in ubiquitin); alternate). Lysine 446 is covalently cross-linked (Glycyl lysine isopeptide (Lys-Gly) (interchain with G-Cter in URM1); alternate). Position 450 is a phosphoserine (serine 450). Residues tryptophan 452 and arginine 459 each contribute to the beta-D-fructose 1,6-bisphosphate site. Position 478 is a phosphothreonine (threonine 478). Residue glycine 484 coordinates beta-D-fructose 1,6-bisphosphate.

The protein belongs to the pyruvate kinase family. Homotetramer. Mg(2+) is required as a cofactor. Requires K(+) as cofactor. Conjugated to URM1, a ubiquitin-like protein, in response to oxidative stresses. The attachment of URM1 to lysine residues exclusively depends on the presence of a peroxidatic cysteine in the target protein, with low specificity for the particular residue, motif, or structural context at which urmylation can occur. The URM1-conjugation reaction is mechanistically and directly coupled to the process of cysteine persulfidation, transfering the sulfur atom of the URM1 thiocarboxyl group to redox-active cysteine residues in the target protein if it is exposed to oxidative conditions. In terms of processing, persulfidated on specific redox-active cysteine residues. Persulfidation (also called protein S-sulfhydration) may provide a molecular mechanism that enables cells to protect vulnerable cysteine residues from reactive oxygen species (ROS) under stress conditions.

It carries out the reaction pyruvate + ATP = phosphoenolpyruvate + ADP + H(+). The protein operates within carbohydrate degradation; glycolysis; pyruvate from D-glyceraldehyde 3-phosphate: step 5/5. The activity is regulated by glucose levels. Activated by fructose-1,6-bisphosphate. In Saccharomyces cerevisiae (strain ATCC 204508 / S288c) (Baker's yeast), this protein is Pyruvate kinase 1 (CDC19).